The primary structure comprises 526 residues: Butyrophilin subfamily 1 member A1 (526 aa).

A signal peptide spans methionine 1–serine 26. Ig-like V-type domains are found at residues alanine 27–histidine 138 and proline 148–serine 234. At alanine 27–arginine 242 the chain is on the extracellular side. Intrachain disulfides connect cysteine 50–cysteine 124 and cysteine 164–cysteine 218. Asparagine 55 and asparagine 215 each carry an N-linked (GlcNAc...) asparagine glycan. Residues leucine 243–tryptophan 269 form a helical membrane-spanning segment. Topologically, residues arginine 270–proline 526 are cytoplasmic. The region spanning serine 285–proline 479 is the B30.2/SPRY domain. A disordered region spans residues isoleucine 495–proline 526. Residues serine 504–histidine 513 show a composition bias toward basic and acidic residues. A compositionally biased stretch (polar residues) spans isoleucine 517–proline 526.

Belongs to the immunoglobulin superfamily. BTN/MOG family. As to quaternary structure, seems to associate with xanthine dehydrogenase/oxidase. N-glycosylated.

The protein resides in the membrane. The protein localises to the secreted. Its function is as follows. May function in the secretion of milk-fat droplets. May act as a specific membrane-associated receptor for the association of cytoplasmic droplets with the apical plasma membrane. Inhibits the proliferation of CD4 and CD8 T-cells activated by anti-CD3 antibodies, T-cell metabolism and IL2 and IFNG secretion. This chain is Butyrophilin subfamily 1 member A1 (BTN1A1), found in Homo sapiens (Human).